The sequence spans 83 residues: Kunitz-type serine protease inhibitor blackelin-2 (83 aa).

The first 24 residues, 1-24 (MSSGGLLLLLGLLTLWEGLTPVSS), serve as a signal peptide directing secretion. Residues 31–81 (CELPDDRGPCRGIFHAFYYNPDQRQCLEFIYGGCYGNANNFKTIDECKRTC) form the BPTI/Kunitz inhibitor domain. Intrachain disulfides connect Cys-31–Cys-81, Cys-40–Cys-64, and Cys-56–Cys-77.

It belongs to the venom Kunitz-type family. As to expression, expressed by the venom gland.

It localises to the secreted. In terms of biological role, serine protease inhibitor. This chain is Kunitz-type serine protease inhibitor blackelin-2, found in Pseudechis porphyriacus (Red-bellied black snake).